The primary structure comprises 147 residues: UPF0735 ACT domain-containing protein ABC1543 (147 aa).

Residues 70–145 (TFSINLADRS…SVERVELVGS (76 aa)) enclose the ACT domain.

This sequence belongs to the UPF0735 family.

The sequence is that of UPF0735 ACT domain-containing protein ABC1543 from Shouchella clausii (strain KSM-K16) (Alkalihalobacillus clausii).